The sequence spans 534 residues: Thromboxane-A synthase (534 aa).

Topologically, residues 1–10 (MEVLGFLSPE) are cytoplasmic. Residues 11–31 (LNGPMVTMALAVVLLALLKWY) form a helical membrane-spanning segment. Residues 32-75 (STSAFSRLEKLGIRHPKPSPFIGNLTFFRQGFWESHMELRKQYG) lie on the Lumenal side of the membrane. Residues 76–96 (PLSGYYLGRRMIVVISDPDMI) form a helical membrane-spanning segment. Topologically, residues 97-223 (KQVLAEKFSN…RRFFAFSVPR (127 aa)) are cytoplasmic. Residues 224 to 244 (LILVLILSFPSIMVPLARILP) form a helical membrane-spanning segment. The Lumenal segment spans residues 245-336 (NKKRDEVNGF…LTVDEVVGQA (92 aa)). The chain crosses the membrane as a helical span at residues 337–357 (FLFLIAGYEIITNTLSFVTYL). Residues 358-534 (LATNPDCQEK…NGVYIRIVPR (177 aa)) are Cytoplasmic-facing. Heme is bound at residue cysteine 480.

Belongs to the cytochrome P450 family. In terms of assembly, monomer. Heme serves as cofactor. As to expression, expressed in lung, kidney and thymus.

It localises to the endoplasmic reticulum membrane. It carries out the reaction prostaglandin H2 = thromboxane A2. It catalyses the reaction prostaglandin H2 = (12S)-hydroxy-(5Z,8E,10E)-heptadecatrienoate + malonaldehyde. The enzyme catalyses a hydroperoxyeicosatetraenoate = an oxoeicosatetraenoate + H2O. The catalysed reaction is (15S)-hydroperoxy-(5Z,8Z,11Z,13E)-eicosatetraenoate = 15-oxo-(5Z,8Z,11Z,13E)-eicosatetraenoate + H2O. It carries out the reaction (15S)-hydroperoxy-(5Z,8Z,11Z,13E)-eicosatetraenoate + AH2 = (15S)-hydroxy-(5Z,8Z,11Z,13E)-eicosatetraenoate + A + H2O. Functionally, catalyzes the conversion of prostaglandin H2 (PGH2) to thromboxane A2 (TXA2), a potent inducer of blood vessel constriction and platelet aggregation. Also cleaves PGH2 to 12-hydroxy-heptadecatrienoicacid (12-HHT) and malondialdehyde, which is known to act as a mediator of DNA damage. 12-HHT and malondialdehyde are formed stoichiometrically in the same amounts as TXA2. Additionally, displays dehydratase activity, toward (15S)-hydroperoxy-(5Z,8Z,11Z,13E)-eicosatetraenoate (15(S)-HPETE) producing 15-KETE and 15-HETE. In Sus scrofa (Pig), this protein is Thromboxane-A synthase (TBXAS1).